The primary structure comprises 135 residues: uncharacterized protein (135 aa).

The tract at residues 100 to 125 (KESPATSSEDISSCSDCDSERLQSDD) is disordered. Over residues 106-115 (SSEDISSCSD) the composition is skewed to low complexity.

This is an uncharacterized protein from Microplitis demolitor (Parasitoid wasp).